A 111-amino-acid chain; its full sequence is uncharacterized protein (111 aa).

Transmembrane regions (helical) follow at residues 7–29 (LYSSIMYVFFYIRIHTVFLRALY) and 49–71 (PSLLMLKIISTPLAFLIPNSINL).

Its subcellular location is the membrane. This is an uncharacterized protein from Saccharomyces cerevisiae (strain ATCC 204508 / S288c) (Baker's yeast).